The chain runs to 102 residues: ATP-dependent Clp protease adapter protein ClpS (102 aa).

Belongs to the ClpS family. Binds to the N-terminal domain of the chaperone ClpA.

Functionally, involved in the modulation of the specificity of the ClpAP-mediated ATP-dependent protein degradation. This is ATP-dependent Clp protease adapter protein ClpS from Shewanella halifaxensis (strain HAW-EB4).